A 136-amino-acid polypeptide reads, in one-letter code: uncharacterized protein (136 aa).

Residues 1-19 (MKKLLMVILGIALIGMAYA) form the signal peptide.

This is an uncharacterized protein from Methanocaldococcus jannaschii (strain ATCC 43067 / DSM 2661 / JAL-1 / JCM 10045 / NBRC 100440) (Methanococcus jannaschii).